Consider the following 397-residue polypeptide: Elongation factor Tu (397 aa).

Positions 10–206 (KPHVNIGTIG…AIDSYIPTPE (197 aa)) constitute a tr-type G domain. The tract at residues 19–26 (GHVDHGKT) is G1. 19-26 (GHVDHGKT) serves as a coordination point for GTP. Mg(2+) is bound at residue Thr-26. The interval 60–64 (GITIN) is G2. The interval 81–84 (DCPG) is G3. GTP is bound by residues 81 to 85 (DCPGH) and 136 to 139 (NKAD). The segment at 136-139 (NKAD) is G4. Positions 174 to 176 (SAL) are G5.

This sequence belongs to the TRAFAC class translation factor GTPase superfamily. Classic translation factor GTPase family. EF-Tu/EF-1A subfamily. As to quaternary structure, monomer.

The protein resides in the cytoplasm. The enzyme catalyses GTP + H2O = GDP + phosphate + H(+). GTP hydrolase that promotes the GTP-dependent binding of aminoacyl-tRNA to the A-site of ribosomes during protein biosynthesis. In Clostridium botulinum (strain Loch Maree / Type A3), this protein is Elongation factor Tu.